Reading from the N-terminus, the 246-residue chain is Uridylate kinase (246 aa).

18-21 is an ATP binding site; the sequence is KLSG. Position 60 (G60) interacts with UMP. Positions 61 and 65 each coordinate ATP. UMP-binding positions include D80 and 141-148; that span reads TGNPFFTT. Residues T168, Y174, and D177 each contribute to the ATP site.

The protein belongs to the UMP kinase family. As to quaternary structure, homohexamer.

It is found in the cytoplasm. The catalysed reaction is UMP + ATP = UDP + ADP. It functions in the pathway pyrimidine metabolism; CTP biosynthesis via de novo pathway; UDP from UMP (UMPK route): step 1/1. With respect to regulation, inhibited by UTP. Functionally, catalyzes the reversible phosphorylation of UMP to UDP. The sequence is that of Uridylate kinase from Pseudomonas syringae pv. syringae (strain B728a).